The sequence spans 305 residues: Phosphoribosylaminoimidazole-succinocarboxamide synthase (305 aa).

Belongs to the SAICAR synthetase family.

It carries out the reaction 5-amino-1-(5-phospho-D-ribosyl)imidazole-4-carboxylate + L-aspartate + ATP = (2S)-2-[5-amino-1-(5-phospho-beta-D-ribosyl)imidazole-4-carboxamido]succinate + ADP + phosphate + 2 H(+). Its pathway is purine metabolism; IMP biosynthesis via de novo pathway; 5-amino-1-(5-phospho-D-ribosyl)imidazole-4-carboxamide from 5-amino-1-(5-phospho-D-ribosyl)imidazole-4-carboxylate: step 1/2. This Tropheryma whipplei (strain Twist) (Whipple's bacillus) protein is Phosphoribosylaminoimidazole-succinocarboxamide synthase.